Reading from the N-terminus, the 619-residue chain is Chaperone protein HscA homolog (619 aa).

The protein belongs to the heat shock protein 70 family.

Functionally, chaperone involved in the maturation of iron-sulfur cluster-containing proteins. Has a low intrinsic ATPase activity which is markedly stimulated by HscB. The polypeptide is Chaperone protein HscA homolog (Acinetobacter baumannii (strain AB0057)).